The primary structure comprises 137 residues: DNA-binding protein H-NS (137 aa).

The DNA-binding element occupies 112 to 117; the sequence is QGRTPA.

The protein belongs to the histone-like protein H-NS family. Homodimer that oligomerizes on DNA into higher-order complexes that form bridges between disparate regions of DNA compacting it. Interacts with Hha, YdgT and StpA.

Its subcellular location is the cytoplasm. The protein localises to the nucleoid. Its function is as follows. A DNA-binding protein implicated in transcriptional repression and chromosome organization and compaction. Binds nucleation sites in AT-rich DNA and bridges them, forming higher-order nucleoprotein complexes and condensing the chromosome. As many horizontally transferred genes are AT-rich, it plays a central role in silencing foreign genes. A subset of genes are repressed by H-NS in association with other proteins. This Salmonella paratyphi A (strain ATCC 9150 / SARB42) protein is DNA-binding protein H-NS (hns).